A 289-amino-acid chain; its full sequence is Protoheme IX farnesyltransferase (289 aa).

9 helical membrane passes run Val9–Met29, Leu40–Cys60, Leu89–Trp109, Pro110–Leu130, Thr134–Ser154, Ala155–Thr175, Tyr190–Arg209, Val228–Val248, and Phe269–Val289.

The protein belongs to the UbiA prenyltransferase family. Protoheme IX farnesyltransferase subfamily.

The protein localises to the cell membrane. The catalysed reaction is heme b + (2E,6E)-farnesyl diphosphate + H2O = Fe(II)-heme o + diphosphate. Its pathway is porphyrin-containing compound metabolism; heme O biosynthesis; heme O from protoheme: step 1/1. Functionally, converts heme B (protoheme IX) to heme O by substitution of the vinyl group on carbon 2 of heme B porphyrin ring with a hydroxyethyl farnesyl side group. This chain is Protoheme IX farnesyltransferase, found in Frankia casuarinae (strain DSM 45818 / CECT 9043 / HFP020203 / CcI3).